Here is a 231-residue protein sequence, read N- to C-terminus: Ribosomal RNA small subunit methyltransferase nep-1 (231 aa).

Residues methionine 161, glycine 188, glycine 193, and 206–211 (ISNYPL) contribute to the S-adenosyl-L-methionine site.

This sequence belongs to the class IV-like SAM-binding methyltransferase superfamily. RNA methyltransferase NEP1 family. As to quaternary structure, homodimer.

Its subcellular location is the nucleus. It is found in the nucleolus. It carries out the reaction a pseudouridine in rRNA + S-adenosyl-L-methionine = an N(1)-methylpseudouridine in rRNA + S-adenosyl-L-homocysteine + H(+). In terms of biological role, S-adenosyl-L-methionine-dependent pseudouridine N(1)-methyltransferase that methylates a pseudouridine in 18S rRNA. Involved the biosynthesis of the hypermodified N1-methyl-N3-(3-amino-3-carboxypropyl) pseudouridine (m1acp3-Psi) conserved in eukaryotic 18S rRNA. Also has an essential role in 40S ribosomal subunit biogenesis independent on its methyltransferase activity, facilitating the incorporation of ribosomal protein S19 during the formation of pre-ribosomes. The sequence is that of Ribosomal RNA small subunit methyltransferase nep-1 from Caenorhabditis elegans.